A 191-amino-acid polypeptide reads, in one-letter code: Flavin prenyltransferase UbiX (191 aa).

Residues 13-15 (GAS), T39, 90-93 (TMKT), and R125 each bind FMN. Residues Y155 and K171 each contribute to the dimethylallyl phosphate site.

The protein belongs to the UbiX/PAD1 family.

It carries out the reaction dimethylallyl phosphate + FMNH2 = prenylated FMNH2 + phosphate. Flavin prenyltransferase that catalyzes the synthesis of the prenylated FMN cofactor (prenyl-FMN) for 4-hydroxy-3-polyprenylbenzoic acid decarboxylase UbiD. The prenyltransferase is metal-independent and links a dimethylallyl moiety from dimethylallyl monophosphate (DMAP) to the flavin N5 and C6 atoms of FMN. In Methanothermobacter thermautotrophicus (strain ATCC 29096 / DSM 1053 / JCM 10044 / NBRC 100330 / Delta H) (Methanobacterium thermoautotrophicum), this protein is Flavin prenyltransferase UbiX.